We begin with the raw amino-acid sequence, 389 residues long: Succinate--CoA ligase [ADP-forming] subunit beta (389 aa).

The ATP-grasp domain occupies 9–244 (KEIFRSMGVA…LDEEDPKEIE (236 aa)). ATP contacts are provided by residues Lys-46, 53 to 55 (GRG), Glu-99, Cys-102, and Glu-107. Residues Asn-199 and Asp-213 each coordinate Mg(2+). Substrate-binding positions include Asn-264 and 321-323 (GIM).

This sequence belongs to the succinate/malate CoA ligase beta subunit family. Heterotetramer of two alpha and two beta subunits. Requires Mg(2+) as cofactor.

The catalysed reaction is succinate + ATP + CoA = succinyl-CoA + ADP + phosphate. It carries out the reaction GTP + succinate + CoA = succinyl-CoA + GDP + phosphate. The protein operates within carbohydrate metabolism; tricarboxylic acid cycle; succinate from succinyl-CoA (ligase route): step 1/1. Functionally, succinyl-CoA synthetase functions in the citric acid cycle (TCA), coupling the hydrolysis of succinyl-CoA to the synthesis of either ATP or GTP and thus represents the only step of substrate-level phosphorylation in the TCA. The beta subunit provides nucleotide specificity of the enzyme and binds the substrate succinate, while the binding sites for coenzyme A and phosphate are found in the alpha subunit. The protein is Succinate--CoA ligase [ADP-forming] subunit beta of Macrococcus caseolyticus (strain JCSC5402) (Macrococcoides caseolyticum).